The sequence spans 632 residues: 2-hydroxyacyl-CoA lyase 2 (632 aa).

A helical transmembrane segment spans residues 13-33 (FFPSFLLLAFGTLVAAVLGVA). A thiamine diphosphate-binding site is contributed by glutamate 98. Serine 369 carries the post-translational modification Phosphoserine. Residues 470-550 (DFVATAAYLV…VIALVGNDAG (81 aa)) are thiamine pyrophosphate binding. Residues aspartate 521 and asparagine 547 each coordinate Mg(2+).

This sequence belongs to the TPP enzyme family. It depends on Mg(2+) as a cofactor. Thiamine diphosphate serves as cofactor.

The protein localises to the endoplasmic reticulum membrane. It catalyses the reaction 2-hydroxyoctadecanoyl-CoA = heptadecanal + formyl-CoA. It carries out the reaction (2R)-hydroxyhexadecanoyl-CoA = pentadecanal + formyl-CoA. Its function is as follows. Endoplasmic reticulum 2-OH acyl-CoA lyase involved in the cleavage (C1 removal) reaction in the fatty acid alpha-oxydation in a thiamine pyrophosphate (TPP)-dependent manner. Involved in the phytosphingosine degradation pathway. The chain is 2-hydroxyacyl-CoA lyase 2 (Ilvbl) from Mus musculus (Mouse).